Reading from the N-terminus, the 384-residue chain is N-acetyldiaminopimelate deacetylase (384 aa).

The active site involves aspartate 74. Glutamate 133 serves as the catalytic Proton acceptor.

This sequence belongs to the peptidase M20A family. N-acetyldiaminopimelate deacetylase subfamily.

It catalyses the reaction N-acetyl-(2S,6S)-2,6-diaminopimelate + H2O = (2S,6S)-2,6-diaminopimelate + acetate. Its pathway is amino-acid biosynthesis; L-lysine biosynthesis via DAP pathway; LL-2,6-diaminopimelate from (S)-tetrahydrodipicolinate (acetylase route): step 3/3. Catalyzes the conversion of N-acetyl-diaminopimelate to diaminopimelate and acetate. This is N-acetyldiaminopimelate deacetylase from Leuconostoc mesenteroides subsp. mesenteroides (strain ATCC 8293 / DSM 20343 / BCRC 11652 / CCM 1803 / JCM 6124 / NCDO 523 / NBRC 100496 / NCIMB 8023 / NCTC 12954 / NRRL B-1118 / 37Y).